Reading from the N-terminus, the 292-residue chain is Fat storage-inducing transmembrane protein 1 (292 aa).

The Lumenal segment spans residues 1–18 (MERGPVVGAGLGAGARIQ). The helical transmembrane segment at 19 to 39 (ALLGCLLKVLLWVASALLYFG) threads the bilayer. Over 40–54 (SEQAARLLGSPCLRR) the chain is Cytoplasmic. Residues 55–75 (LYHAWLAAVVIFGPLLQFHVN) form a helical membrane-spanning segment. Residues 76-94 (PRTIFASHGNFFNIKFVNS) lie on the Lumenal side of the membrane. The helical transmembrane segment at 95–115 (AWGWTCTFLGGFVLLVVFLAT) threads the bilayer. Residues 116 to 141 (RRVAVTARHLSRLVVGAAVWRGAGRA) lie on the Cytoplasmic side of the membrane. A helical transmembrane segment spans residues 142–162 (FLLIEDLTGSCFEPLPQGLLL). Topologically, residues 163–187 (HELPDRRSCLAAGHQWRGYTVSSHT) are lumenal. The active site involves histidine 186. A helical transmembrane segment spans residues 188–208 (FLLTFCCLLMAEEAAVFAKYL). Residues 209 to 220 (AHGLPAGAPLRL) are Cytoplasmic-facing. Residues 221–241 (VFLLNVLLLGLWNFLLLCTVI) traverse the membrane as a helical segment. Residues 242-249 (YFHQYTHK) lie on the Lumenal side of the membrane. The active site involves histidine 244. A helical transmembrane segment spans residues 250 to 270 (VVGAAVGTFAWYLTYGSWYHQ). Residues 271–292 (PWSPGSPGHGLFPRPHSSRKHN) lie on the Cytoplasmic side of the membrane.

It belongs to the FIT family. FIT1 subfamily. Primarily expressed in heart and skeletal muscle.

The protein localises to the endoplasmic reticulum membrane. In terms of biological role, plays an important role in the formation of lipid droplets (LDs) which are storage organelles at the center of lipid and energy homeostasis. Directly binds to diacylglycerol (DAGs) and triacylglycerol. The protein is Fat storage-inducing transmembrane protein 1 of Homo sapiens (Human).